We begin with the raw amino-acid sequence, 356 residues long: MTWRKIIHIDMDAFYASVEQRDDPSLRGQPVVVGGSPEGRGVVAAASYEARAFGIRSAQPAAWARRRCPEAIFLRPRFDRYRAISRQIHGIFADFATTIEPLSLDEAYLDVTGSQRFRGSATHMAQAIRRRIREETGLTASAGVSYNKLLAKLASDEGKPDGLYVVPPEDGPAYVAAQPIRRLHGVGPATAARLERLGIRQVGDLLDWELADLHVFLGNRAGTLHDAARGIDHRPVRPRRSRKSIGAERTFGDDTRDLGEIHQRLAPLITKVATRLEHHELVARTVTLKLRYADFESITRRVSPPGPVAQAADIEALIPALLAETEAGSRPVRLLGVSLSGLQPKQREQDLFSALT.

A UmuC domain is found at 6-187 (IIHIDMDAFY…QPIRRLHGVG (182 aa)). 2 residues coordinate Mg(2+): D10 and D105. Residue E106 is part of the active site.

Belongs to the DNA polymerase type-Y family. In terms of assembly, monomer. The cofactor is Mg(2+).

It localises to the cytoplasm. It catalyses the reaction DNA(n) + a 2'-deoxyribonucleoside 5'-triphosphate = DNA(n+1) + diphosphate. Functionally, poorly processive, error-prone DNA polymerase involved in untargeted mutagenesis. Copies undamaged DNA at stalled replication forks, which arise in vivo from mismatched or misaligned primer ends. These misaligned primers can be extended by PolIV. Exhibits no 3'-5' exonuclease (proofreading) activity. May be involved in translesional synthesis, in conjunction with the beta clamp from PolIII. The protein is DNA polymerase IV of Halorhodospira halophila (strain DSM 244 / SL1) (Ectothiorhodospira halophila (strain DSM 244 / SL1)).